Here is a 359-residue protein sequence, read N- to C-terminus: 1-deoxy-D-xylulose 5-phosphate reductoisomerase (359 aa).

Residues Thr-12, Gly-13, Ser-14, Ile-15, Lys-38, and Asn-39 each contribute to the NADPH site. Lys-105 serves as a coordination point for 1-deoxy-D-xylulose 5-phosphate. Glu-106 lines the NADPH pocket. Residue Asp-130 participates in Mn(2+) binding. Residues Ser-131, Glu-132, Ser-152, and His-175 each contribute to the 1-deoxy-D-xylulose 5-phosphate site. Mn(2+) is bound at residue Glu-132. NADPH is bound at residue Gly-181. Ser-188, Asn-193, Lys-194, and Glu-197 together coordinate 1-deoxy-D-xylulose 5-phosphate. Glu-197 is a Mn(2+) binding site.

The protein belongs to the DXR family. The cofactor is Mg(2+). Requires Mn(2+) as cofactor.

It carries out the reaction 2-C-methyl-D-erythritol 4-phosphate + NADP(+) = 1-deoxy-D-xylulose 5-phosphate + NADPH + H(+). Its pathway is isoprenoid biosynthesis; isopentenyl diphosphate biosynthesis via DXP pathway; isopentenyl diphosphate from 1-deoxy-D-xylulose 5-phosphate: step 1/6. Catalyzes the NADPH-dependent rearrangement and reduction of 1-deoxy-D-xylulose-5-phosphate (DXP) to 2-C-methyl-D-erythritol 4-phosphate (MEP). The protein is 1-deoxy-D-xylulose 5-phosphate reductoisomerase of Pseudothermotoga lettingae (strain ATCC BAA-301 / DSM 14385 / NBRC 107922 / TMO) (Thermotoga lettingae).